A 445-amino-acid polypeptide reads, in one-letter code: Chromosome partition protein MukF (445 aa).

The interval 213–241 is leucine-zipper; sequence LSETSATLRELQDTLQAAGDELQTQILDI.

This sequence belongs to the MukF family. Interacts, and probably forms a ternary complex, with MukE and MukB via its C-terminal region. The complex formation is stimulated by calcium or magnesium. It is required for an interaction between MukE and MukB.

It is found in the cytoplasm. The protein localises to the nucleoid. Functionally, involved in chromosome condensation, segregation and cell cycle progression. May participate in facilitating chromosome segregation by condensation DNA from both sides of a centrally located replisome during cell division. Not required for mini-F plasmid partitioning. Probably acts via its interaction with MukB and MukE. Overexpression results in anucleate cells. It has a calcium binding activity. The sequence is that of Chromosome partition protein MukF from Vibrio cholerae serotype O1 (strain ATCC 39315 / El Tor Inaba N16961).